Reading from the N-terminus, the 45-residue chain is DNA replication protein repEB (45 aa).

Functionally, involved in T4 DNA replication. Important for the priming of leading strand DNA synthesis at oriE. Binds to ssDNA. This Enterobacteria phage T4 (Bacteriophage T4) protein is DNA replication protein repEB (repEB).